The following is a 205-amino-acid chain: MGSSEQELVAIVRELGCGPYFLGTFDKRFPGFMAPHKLACAIVNTAGRETGGVHWLALAWNPKNRTCYLFDPFGFSDERLKQIYQFEYEGLLKRSALASTPDHCITLIKSTQTVQGPFSAACGLFCCMFLHAFVNWPTSPMERNPTMDLLTGVPNSMLQSPQVVPTLRHNQERLYRFLAQRSPYFQRHCERIKKATAFDQMKNNM.

Catalysis depends on residues His-54, Asp-71, and Cys-122.

It belongs to the peptidase C5 family. As to quaternary structure, interacts with protease cofactor pVI-C; this interaction is necessary for protease activation.

Its subcellular location is the virion. It localises to the host nucleus. The enzyme catalyses Cleaves proteins of the adenovirus and its host cell at two consensus sites: -Yaa-Xaa-Gly-Gly-|-Xaa- and -Yaa-Xaa-Gly-Xaa-|-Gly- (in which Yaa is Met, Ile or Leu, and Xaa is any amino acid).. Its activity is regulated as follows. Requires DNA and protease cofactor for maximal activation. Inside nascent virions, becomes partially activated by binding to the viral DNA, allowing it to cleave the cofactor that binds to the protease and fully activates it. Actin, like the viral protease cofactor, seems to act as a cofactor in the cleavage of cytokeratin 18 and of actin itself. Functionally, cleaves viral precursor proteins (pTP, pIIIa, pVI, pVII, pVIII, and pX) inside newly assembled particles giving rise to mature virions. Protease complexed to its cofactor slides along the viral DNA to specifically locate and cleave the viral precursors. Mature virions have a weakened organization compared to the unmature virions, thereby facilitating subsequent uncoating. Without maturation, the particle lacks infectivity and is unable to uncoat. Late in adenovirus infection, in the cytoplasm, may participate in the cytoskeleton destruction. Cleaves host cell cytoskeletal keratins K7 and K18. This is Protease from Homo sapiens (Human).